The chain runs to 342 residues: Ferredoxin--NADP reductase (342 aa).

Residues Cys17, Asp36, Gln44, Tyr49, Ile89, Phe124, Asp289, and Thr330 each coordinate FAD.

Belongs to the ferredoxin--NADP reductase type 2 family. In terms of assembly, homodimer. FAD is required as a cofactor.

It catalyses the reaction 2 reduced [2Fe-2S]-[ferredoxin] + NADP(+) + H(+) = 2 oxidized [2Fe-2S]-[ferredoxin] + NADPH. In Rhodopseudomonas palustris (strain BisA53), this protein is Ferredoxin--NADP reductase.